The chain runs to 372 residues: Putative 26S proteasome regulatory subunit homolog MTBMA_c13930 (372 aa).

Residue G164 to T171 participates in ATP binding.

This sequence belongs to the AAA ATPase family.

Its function is as follows. The 26S proteasome is involved in the ATP-dependent degradation of ubiquitinated proteins. The regulatory (or ATPase) complex confers ATP dependency and substrate specificity to the 26S complex. The sequence is that of Putative 26S proteasome regulatory subunit homolog MTBMA_c13930 from Methanothermobacter marburgensis (strain ATCC BAA-927 / DSM 2133 / JCM 14651 / NBRC 100331 / OCM 82 / Marburg) (Methanobacterium thermoautotrophicum).